The chain runs to 429 residues: Serine--tRNA ligase (429 aa).

235 to 237 (TAE) is an L-serine binding site. ATP is bound at residue 266–268 (RSE). An L-serine-binding site is contributed by Glu289. 353–356 (EISS) provides a ligand contact to ATP. L-serine is bound at residue Ser389.

This sequence belongs to the class-II aminoacyl-tRNA synthetase family. Type-1 seryl-tRNA synthetase subfamily. As to quaternary structure, homodimer. The tRNA molecule binds across the dimer.

It localises to the cytoplasm. It carries out the reaction tRNA(Ser) + L-serine + ATP = L-seryl-tRNA(Ser) + AMP + diphosphate + H(+). The catalysed reaction is tRNA(Sec) + L-serine + ATP = L-seryl-tRNA(Sec) + AMP + diphosphate + H(+). Its pathway is aminoacyl-tRNA biosynthesis; selenocysteinyl-tRNA(Sec) biosynthesis; L-seryl-tRNA(Sec) from L-serine and tRNA(Sec): step 1/1. Its function is as follows. Catalyzes the attachment of serine to tRNA(Ser). Is also able to aminoacylate tRNA(Sec) with serine, to form the misacylated tRNA L-seryl-tRNA(Sec), which will be further converted into selenocysteinyl-tRNA(Sec). The polypeptide is Serine--tRNA ligase (Histophilus somni (strain 2336) (Haemophilus somnus)).